Here is a 455-residue protein sequence, read N- to C-terminus: Rhodopsin (455 aa).

Residues 1-34 (MVESTTLVNQTWWYNPTVDIHPHWAKFDPIPDAV) are Extracellular-facing. N-linked (GlcNAc...) asparagine glycosylation occurs at Asn-9. Residues 35–59 (YYSVGIFIGVVGIIGILGNGVVIYL) form a helical membrane-spanning segment. Topologically, residues 60–71 (FSKTKSLQTPAN) are cytoplasmic. A helical transmembrane segment spans residues 72-98 (MFIINLAMSDLSFSAINGFPLKTISAF). The Extracellular portion of the chain corresponds to 99–110 (MKKWIFGKVACQ). Cys-109 and Cys-187 are disulfide-bonded. The chain crosses the membrane as a helical span at residues 111 to 132 (LYGLLGGIFGFMSINTMAMISI). Residues 133 to 135 (DRY) carry the 'Ionic lock' involved in activated form stabilization motif. Over 133–152 (DRYNVIGRPMAASKKMSHRR) the chain is Cytoplasmic. The chain crosses the membrane as a helical span at residues 153 to 173 (AFLMIIFVWMWSIVWSVGPVF). Residues 174-200 (NWGAYVPEGILTSCSFDYLSTDPSTRS) are Extracellular-facing. The chain crosses the membrane as a helical span at residues 201-225 (FILCMYFCGFMLPIIIIAFCYFNIV). Residues 226 to 262 (MSVSNHEKEMAAMAKRLNAKELRKAQAGASAEMKLAK) are Cytoplasmic-facing. Residues 263-284 (ISMVIITQFMLSWSPYAIIALL) form a helical membrane-spanning segment. The Extracellular segment spans residues 285–294 (AQFGPAEWVT). A helical membrane pass occupies residues 295 to 316 (PYAAELPVLFAKASAIHNPIVY). Lys-306 carries the N6-(retinylidene)lysine modification. Over 317–455 (SVSHPKFREA…QGVDNQAYQA (139 aa)) the chain is Cytoplasmic. Residues Cys-337 and Cys-338 are each lipidated (S-palmitoyl cysteine). The segment covering 378 to 387 (QKMQAQQAAY) has biased composition (low complexity). The tract at residues 378 to 455 (QKMQAQQAAY…QGVDNQAYQA (78 aa)) is disordered. Positions 388 to 433 (QPPPPPQGYPPQGYPPQGAYPPPQGYPPQGYPPQGYPPQGYPPQGA) are enriched in pro residues. 6 repeat units span residues 395–399 (GYPPQ), 400–404 (GYPPQ), 412–416 (GYPPQ), 417–421 (GYPPQ), 422–426 (GYPPQ), and 427–431 (GYPPQ). Residues 395–431 (GYPPQGYPPQGAYPPPQGYPPQGYPPQGYPPQGYPPQ) form a 6 X 5 AA repeats of G-Y-P-P-Q region.

This sequence belongs to the G-protein coupled receptor 1 family. Opsin subfamily. Contains one covalently linked retinal chromophore. Upon light absorption, the covalently bound 11-cis-retinal is converted to all-trans-retinal. After hydrolysis of the Schiff base and release of the covalently bound all-trans-retinal, active rhodopsin is regenerated by binding of a fresh molecule of 11-cis-retinal.

The protein resides in the cell projection. Its subcellular location is the rhabdomere membrane. Functionally, photoreceptor required for image-forming vision at low light intensity. Light-induced isomerization of 11-cis to all-trans retinal triggers a conformational change that activates signaling via G-proteins. Signaling mediates the activation of phospholipase C. Subsequent receptor phosphorylation mediates displacement of the bound G-protein alpha subunit by arrestin and terminates signaling. The polypeptide is Rhodopsin (RHO) (Enteroctopus dofleini (North Pacific giant octopus)).